The chain runs to 72 residues: Translation initiation factor IF-1 (72 aa).

In terms of domain architecture, S1-like spans Met-1–Arg-72.

Belongs to the IF-1 family. Component of the 30S ribosomal translation pre-initiation complex which assembles on the 30S ribosome in the order IF-2 and IF-3, IF-1 and N-formylmethionyl-tRNA(fMet); mRNA recruitment can occur at any time during PIC assembly.

It localises to the cytoplasm. Functionally, one of the essential components for the initiation of protein synthesis. Stabilizes the binding of IF-2 and IF-3 on the 30S subunit to which N-formylmethionyl-tRNA(fMet) subsequently binds. Helps modulate mRNA selection, yielding the 30S pre-initiation complex (PIC). Upon addition of the 50S ribosomal subunit IF-1, IF-2 and IF-3 are released leaving the mature 70S translation initiation complex. This chain is Translation initiation factor IF-1, found in Aeromonas hydrophila subsp. hydrophila (strain ATCC 7966 / DSM 30187 / BCRC 13018 / CCUG 14551 / JCM 1027 / KCTC 2358 / NCIMB 9240 / NCTC 8049).